The sequence spans 385 residues: 1-deoxy-D-xylulose 5-phosphate reductoisomerase (385 aa).

Thr-13, Gly-14, Ser-15, Ile-16, Asn-40, and Asn-122 together coordinate NADPH. Lys-123 lines the 1-deoxy-D-xylulose 5-phosphate pocket. Residue Glu-124 participates in NADPH binding. Mn(2+) is bound at residue Asp-148. 1-deoxy-D-xylulose 5-phosphate is bound by residues Ser-149, Glu-150, Ser-177, and His-200. Glu-150 lines the Mn(2+) pocket. Gly-206 serves as a coordination point for NADPH. Residues Ser-213, Asn-218, Lys-219, and Glu-222 each contribute to the 1-deoxy-D-xylulose 5-phosphate site. Position 222 (Glu-222) interacts with Mn(2+).

Belongs to the DXR family. Requires Mg(2+) as cofactor. Mn(2+) is required as a cofactor.

The catalysed reaction is 2-C-methyl-D-erythritol 4-phosphate + NADP(+) = 1-deoxy-D-xylulose 5-phosphate + NADPH + H(+). It functions in the pathway isoprenoid biosynthesis; isopentenyl diphosphate biosynthesis via DXP pathway; isopentenyl diphosphate from 1-deoxy-D-xylulose 5-phosphate: step 1/6. Its function is as follows. Catalyzes the NADPH-dependent rearrangement and reduction of 1-deoxy-D-xylulose-5-phosphate (DXP) to 2-C-methyl-D-erythritol 4-phosphate (MEP). The sequence is that of 1-deoxy-D-xylulose 5-phosphate reductoisomerase from Francisella tularensis subsp. novicida (strain U112).